Consider the following 74-residue polypeptide: Translation initiation factor IF-1 (74 aa).

Positions 1–72 constitute an S1-like domain; that stretch reads MAKETEMEFE…TRGRITYRKI (72 aa).

This sequence belongs to the IF-1 family. In terms of assembly, component of the 30S ribosomal translation pre-initiation complex which assembles on the 30S ribosome in the order IF-2 and IF-3, IF-1 and N-formylmethionyl-tRNA(fMet); mRNA recruitment can occur at any time during PIC assembly.

It is found in the cytoplasm. Functionally, one of the essential components for the initiation of protein synthesis. Stabilizes the binding of IF-2 and IF-3 on the 30S subunit to which N-formylmethionyl-tRNA(fMet) subsequently binds. Helps modulate mRNA selection, yielding the 30S pre-initiation complex (PIC). Upon addition of the 50S ribosomal subunit IF-1, IF-2 and IF-3 are released leaving the mature 70S translation initiation complex. The sequence is that of Translation initiation factor IF-1 from Mycoplasma capricolum subsp. capricolum (strain California kid / ATCC 27343 / NCTC 10154).